The primary structure comprises 461 residues: Cyclin-A2-4 (461 aa).

The protein belongs to the cyclin family. Cyclin AB subfamily.

This Arabidopsis thaliana (Mouse-ear cress) protein is Cyclin-A2-4 (CYCA2-4).